Consider the following 547-residue polypeptide: Serine beta-lactamase-like protein LACTB, mitochondrial (547 aa).

Residues 1 to 115 (MYRLMSAVTA…RAIESSRDLL (115 aa)) constitute a mitochondrion transit peptide. Low complexity predominate over residues 62-83 (GAAPAQSPAAPDPEASPLAEPP). The segment at 62-96 (GAAPAQSPAAPDPEASPLAEPPQEQSLAPWSPQTP) is disordered. The active-site Acyl-ester intermediate is Ser-164. N6-succinyllysine is present on residues Lys-283 and Lys-284. An N6-acetyllysine mark is found at Lys-297 and Lys-342.

It belongs to the peptidase S12 family. In terms of tissue distribution, expressed predominantly in skeletal muscle.

Its subcellular location is the mitochondrion. Its function is as follows. Mitochondrial serine protease that acts as a regulator of mitochondrial lipid metabolism. Acts by decreasing protein levels of PISD, a mitochondrial enzyme that converts phosphatidylserine (PtdSer) to phosphatidylethanolamine (PtdEtn), thereby affecting mitochondrial lipid metabolism. It is unclear whether it acts directly by mediating proteolysis of PISD or by mediating proteolysis of another lipid metabolism protein. Acts as a tumor suppressor that has the ability to inhibit proliferation of multiple types of breast cancer cells: probably by promoting decreased levels of PISD, thereby affecting mitochondrial lipid metabolism. This is Serine beta-lactamase-like protein LACTB, mitochondrial from Homo sapiens (Human).